The primary structure comprises 74 residues: MALSKMKDLLDLSDAEVETQILDLKRQLFQLRLQKATRQEVKPHQFKHLRHQLAQLMTLERQRQLTQQQTSVQE.

It belongs to the universal ribosomal protein uL29 family.

This Cyanothece sp. (strain PCC 7425 / ATCC 29141) protein is Large ribosomal subunit protein uL29.